The sequence spans 453 residues: Ribosomal protein uS12 methylthiotransferase RimO (453 aa).

Residues 9–124 (PKVGFVSLGC…VMEAVHTHLP (116 aa)) form the MTTase N-terminal domain. 6 residues coordinate [4Fe-4S] cluster: Cys18, Cys54, Cys83, Cys155, Cys159, and Cys162. Residues 141 to 382 (LTPKHYAYLK…MEVAERVSAR (242 aa)) enclose the Radical SAM core domain. One can recognise a TRAM domain in the interval 385-453 (QRKVGKSLRV…ADGHDLWGEV (69 aa)).

This sequence belongs to the methylthiotransferase family. RimO subfamily. The cofactor is [4Fe-4S] cluster.

Its subcellular location is the cytoplasm. It carries out the reaction L-aspartate(89)-[ribosomal protein uS12]-hydrogen + (sulfur carrier)-SH + AH2 + 2 S-adenosyl-L-methionine = 3-methylsulfanyl-L-aspartate(89)-[ribosomal protein uS12]-hydrogen + (sulfur carrier)-H + 5'-deoxyadenosine + L-methionine + A + S-adenosyl-L-homocysteine + 2 H(+). Its function is as follows. Catalyzes the methylthiolation of an aspartic acid residue of ribosomal protein uS12. This Ralstonia pickettii (strain 12J) protein is Ribosomal protein uS12 methylthiotransferase RimO.